The sequence spans 105 residues: Small ribosomal subunit protein uS10 (105 aa).

This sequence belongs to the universal ribosomal protein uS10 family. As to quaternary structure, part of the 30S ribosomal subunit.

Functionally, involved in the binding of tRNA to the ribosomes. This Rickettsia rickettsii (strain Iowa) protein is Small ribosomal subunit protein uS10.